Consider the following 269-residue polypeptide: 5'-nucleotidase SurE (269 aa).

A divalent metal cation contacts are provided by Asp-11, Asp-12, Ser-43, and Asn-101.

Belongs to the SurE nucleotidase family. It depends on a divalent metal cation as a cofactor.

The protein localises to the cytoplasm. The catalysed reaction is a ribonucleoside 5'-phosphate + H2O = a ribonucleoside + phosphate. In terms of biological role, nucleotidase that shows phosphatase activity on nucleoside 5'-monophosphates. The chain is 5'-nucleotidase SurE from Prochlorococcus marinus (strain AS9601).